We begin with the raw amino-acid sequence, 217 residues long: Probable ribonuclease P protein subunit 1 (217 aa).

Belongs to the eukaryotic/archaeal RNase P protein component 1 family.

It localises to the nucleus. The protein localises to the nucleolus. The enzyme catalyses Endonucleolytic cleavage of RNA, removing 5'-extranucleotides from tRNA precursor.. Part of ribonuclease P, a protein complex that generates mature tRNA molecules by cleaving their 5'-ends. This Schizosaccharomyces pombe (strain 972 / ATCC 24843) (Fission yeast) protein is Probable ribonuclease P protein subunit 1.